Reading from the N-terminus, the 428-residue chain is Phosphoglucosamine mutase (428 aa).

Ser96 (phosphoserine intermediate) is an active-site residue. Residues Ser96, Asp229, Asp231, and Asp233 each contribute to the Mg(2+) site. Ser96 bears the Phosphoserine mark.

The protein belongs to the phosphohexose mutase family. The cofactor is Mg(2+). Activated by phosphorylation.

It carries out the reaction alpha-D-glucosamine 1-phosphate = D-glucosamine 6-phosphate. Catalyzes the conversion of glucosamine-6-phosphate to glucosamine-1-phosphate. The chain is Phosphoglucosamine mutase from Thermotoga neapolitana (strain ATCC 49049 / DSM 4359 / NBRC 107923 / NS-E).